The following is a 398-amino-acid chain: MKVYDLPDSHGHFGPYGGIFVAETLISALEDLRIQYERYRSDADFQAEFAHELKHYVGRPTPIYHAKRWSAQLGGAQILLKREDLNHTGAHKINNAMGQALLARRMGKSRVIAETGAGQHGVATATVAARYGMECVIYMGSVDVERQAANVYRMKLLGAEVIPVESGSRTLKDALNEAMRDWVTNVADTFYIIGTVAGPHPYPMMVRDFQAIIGREAITQMQEDYGRQPDALIACVGGGSNAIGLFYPYLDSSIRMIGVEAAGHGVETDQHAATLTKGRPGVLHGNRTYLIQDENGQIVETHSISAGLDYPGVGPEHAWLKDSGRAEYFGITDEQALEAFHALCHYEGIIPALESSHALAYAARLAPALTSDKLLLVNLSGRGDKDMPTVARASHITF.

Lys-92 carries the N6-(pyridoxal phosphate)lysine modification.

Belongs to the TrpB family. Tetramer of two alpha and two beta chains. It depends on pyridoxal 5'-phosphate as a cofactor.

It catalyses the reaction (1S,2R)-1-C-(indol-3-yl)glycerol 3-phosphate + L-serine = D-glyceraldehyde 3-phosphate + L-tryptophan + H2O. Its pathway is amino-acid biosynthesis; L-tryptophan biosynthesis; L-tryptophan from chorismate: step 5/5. The beta subunit is responsible for the synthesis of L-tryptophan from indole and L-serine. In Nitrosospira multiformis (strain ATCC 25196 / NCIMB 11849 / C 71), this protein is Tryptophan synthase beta chain.